The primary structure comprises 192 residues: RNA-free ribonuclease P (192 aa).

This sequence belongs to the HARP family.

The enzyme catalyses Endonucleolytic cleavage of RNA, removing 5'-extranucleotides from tRNA precursor.. Functionally, RNA-free RNase P that catalyzes the removal of the 5'-leader sequence from pre-tRNA to produce the mature 5'-terminus. In Alkalilimnicola ehrlichii (strain ATCC BAA-1101 / DSM 17681 / MLHE-1), this protein is RNA-free ribonuclease P.